The sequence spans 226 residues: 2,3-bisphosphoglycerate-dependent phosphoglycerate mutase (226 aa).

Residues 8 to 15, 21 to 22, R58, 109 to 112, K120, 136 to 137, and 180 to 181 each bind substrate; these read RHGQSVWN, TG, ERMY, RR, and GN. The Tele-phosphohistidine intermediate role is filled by H9. The active-site Proton donor/acceptor is the E109.

Belongs to the phosphoglycerate mutase family. BPG-dependent PGAM subfamily.

The catalysed reaction is (2R)-2-phosphoglycerate = (2R)-3-phosphoglycerate. It participates in carbohydrate degradation; glycolysis; pyruvate from D-glyceraldehyde 3-phosphate: step 3/5. Catalyzes the interconversion of 2-phosphoglycerate and 3-phosphoglycerate. This Chlamydia trachomatis serovar L2 (strain ATCC VR-902B / DSM 19102 / 434/Bu) protein is 2,3-bisphosphoglycerate-dependent phosphoglycerate mutase.